The following is a 132-amino-acid chain: D-ribose pyranase (132 aa).

Histidine 20 serves as the catalytic Proton donor. Residues aspartate 28, histidine 99, and 121-123 (YSN) each bind substrate.

This sequence belongs to the RbsD / FucU family. RbsD subfamily. In terms of assembly, homodecamer.

It localises to the cytoplasm. It catalyses the reaction beta-D-ribopyranose = beta-D-ribofuranose. It participates in carbohydrate metabolism; D-ribose degradation; D-ribose 5-phosphate from beta-D-ribopyranose: step 1/2. Catalyzes the interconversion of beta-pyran and beta-furan forms of D-ribose. This Lactococcus lactis subsp. cremoris (strain MG1363) protein is D-ribose pyranase.